Consider the following 154-residue polypeptide: MutT-like protein (154 aa).

The 122-residue stretch at 15–136 (PLHSVSVAGV…YAIRLLDALD (122 aa)) folds into the Nudix hydrolase domain. 4 residues coordinate Mg(2+): Gly48, Glu63, Glu66, and Glu67. A Nudix box motif is present at residues 48–69 (GVLELDETPETGVAREVWEETG).

Belongs to the Nudix hydrolase family.

This is MutT-like protein from Streptomyces ambofaciens.